A 340-amino-acid chain; its full sequence is MSSAAQQQQKAAAAEQEEVEHGPFPIEQLQASGIAALDVKKLKDSGLHTVEAVAYTPRKDLLQIKGISEAKADKIIEAASKIVPLGFTSASQLHAQRLEIIQVTTGSRELDKILEGGIETGSITEIYGEFRSGKTQLCHTPCVTCQLPLDQGGGEGKALYIDAEGTFRPQRLLQIADRFGLNGADVLENVAYARAYNTDHQSRLLLEAASMMIETRFALMVVDSATALYRTDFSGRGELSARQMHMAKFLRSLQKLADEFGVAVVITNQVVAQVDGSAMFAGPQFKPIGGNIMAHASTTRLALRKGRGEERICKVISSPCLAEAEARFQLASEGIADVKD.

A compositionally biased stretch (low complexity) spans 1 to 14 (MSSAAQQQQKAAAA). Residues 1–21 (MSSAAQQQQKAAAAEQEEVEH) are disordered. The HhH domain maps to 49–78 (TVEAVAYTPRKDLLQIKGISEAKADKIIEA). An ATP-binding site is contributed by 128 to 135 (GEFRSGKT).

It belongs to the RecA family. RAD51 subfamily. In terms of assembly, self-associates and may interact with XRCC3 homolog. As to expression, highly expressed in mitotic and meiotic tissues, but low levels in differentiated tissues.

The protein resides in the nucleus. Binds to single and double-stranded DNA and exhibits DNA-dependent ATPase activity. Unwinds duplex DNA. Component of the meiotic recombination pathway. Seems to play a role in mediating chromosome homology search, chromosome pairing and synapsis at early stages and probably chromosome crossing-over at later stages in meiosis. Probably is involved in the repair of meiotic double strand breaks (DBSs) and in homologous recombination. In Zea mays (Maize), this protein is DNA repair protein RAD51 homolog A (RAD51A).